The primary structure comprises 279 residues: Inorganic pyrophosphatase (279 aa).

Diphosphate is bound at residue arginine 100. Positions 132, 137, and 169 each coordinate Mg(2+).

This sequence belongs to the PPase family. Mg(2+) is required as a cofactor.

The catalysed reaction is diphosphate + H2O = 2 phosphate + H(+). In Dictyostelium discoideum (Social amoeba), this protein is Inorganic pyrophosphatase (ppa1).